The primary structure comprises 209 residues: Large ribosomal subunit protein uL3 (209 aa).

The interval 127-151 (SGGPSSHGSKFHRHLGGTGQATTPA) is disordered.

The protein belongs to the universal ribosomal protein uL3 family. As to quaternary structure, part of the 50S ribosomal subunit. Forms a cluster with proteins L14 and L19.

One of the primary rRNA binding proteins, it binds directly near the 3'-end of the 23S rRNA, where it nucleates assembly of the 50S subunit. The protein is Large ribosomal subunit protein uL3 of Borrelia turicatae (strain 91E135).